Consider the following 171-residue polypeptide: Co-chaperone protein HscB homolog (171 aa).

Residues 2–74 (NHFELFRLPF…ISRAEYMLSE (73 aa)) enclose the J domain.

It belongs to the HscB family. As to quaternary structure, interacts with HscA and stimulates its ATPase activity.

In terms of biological role, co-chaperone involved in the maturation of iron-sulfur cluster-containing proteins. Seems to help targeting proteins to be folded toward HscA. This Photobacterium profundum (strain SS9) protein is Co-chaperone protein HscB homolog.